The chain runs to 2349 residues: MPSTSNPSHVPVAIIGLACRFPGEATSPSKFWDLLKNGRDAYSPNTDRYNADAFYHPKASNRQNVLATKGGHFLKQDPYVFDAAFFNITAAEAISFDPKQRIAMEVVYEALENAGKTLPKVAGTQTACYIGSSMSDYRDAVVRDFGNSPKYHILGTCEEMISNRVSHFLDIHGPSATIHTACSSSLVATHLACQSLQSGESEMAIAGGVGMIITPDGNMHLNNLGFLNPEGHSRSFDENAGGYGRGEGCGILILKRLDRALEDGDSIRAVIRASGVNSDGWTQGVTMPSSQAQSALIKYVYESHGLDYGATQYVEAHGTGTKAGDPAEIGALHRTIGQGASKSRRLWIGSVKPNIGHLEAAAGVAGIIKGVLSMEHGMIPPNIYFSKPNPAIPLDEWNMAVPTKLTPWPASQTGRRMSVSGFGMGGTNGHVVLEAYKPQGKLTNGHTNGITNGIHKTRHSGKRLFVLSAQDQAGFKRLGNALVEHLDALGPAAATPEFLANLSHTLAVGRSGLAWRSSIIAESAPDLREKLATDPGEGAARSSGSEPRIGFVFTGQGAQWARMGVELLERPVFKASVIKSAETLKELGCEWDPIVELSKPQAESRLGVPEISQPICTVLQVALVDELKHWGVSPSKVVGHSSGEIGAAYSIGALSHRDAVAAAYFRGKSSNGAKKLGGGMMAVGCSREDADKLLSETKLKGGVATVACVNSPSSVTISGDAAALEELRVILEEKSVFARRLKVDVAYHSAHMNAVFAEYSAAIAHIEPAQAVEGGPIMVSSVTGSEVDSELLGPYYWTRNLISPVLFADAVKELVTPADGDGQNTVDLLIEIGPHSALGGPVEQILSHNGIKNVAYRSALTRGENAVDCSLKLAGELFLLGVPFELQKANGDSGSRMLTNLPPYPWNHSKSFRADSRLHREHLEQKFPTRSLIGAPVPMMAESEYTWRNFIRLADEPWLRGHTVGTTVLFPGAGIVSIILEAAQQLVDTGKTVRGFRMRDVNLFAAMALPEDLATEVIIHIRPHLISTVGSTAPGGWWEWTVSSCVGTDQLRDNARGLVAIDYEESRSEQINAEDKALVASQVADYHKILSECPEHYAHDKFYQHMTKASWSYGELFQGVENVRPGYGKTIFDIRVIDIGETFSKGQLERPFLINAATLDAVFQSWLGSTYNNGAFEFDKPFVPTSIGELEISVNIPGDGDYLMPGHCRSERYGFNELSADIAIFDKDLKNVFLSVKDFRTSELDMDSGKGDGDAAHVDPADINSEVKWNYALGLLKSEEITELVTKVASNDKLAELLRLTLHNNPAATVIELVSDESKISGASSAKLSKGLILPSQIRYVVVNPEAADADSFFKFFSLGEDGAPVAAERGPAELLIASSEVTDAAVLERLITLAKPDASILVAVNNKTTAAALSAKAFRVVTSIQDSKSIALYTSKKAPAADTSKLEAIILKPTTAQPAAQNFASILQKALELQGYSVVSQPWGTDIDVNDAKGKTYISLLELEQPLLDNLSKSDFENLRAVVLNCERLLWVTAGDNPSFGMVDGFARCIMSEIASTKFQVLHLSAATGLKYGSSLATRILQSDSTDNEYREVDGALQVARIFKSYNENESLRHHLEDTTSVVTLADQEDALRLTIGKPGLLDTLKFVPDERMLPPLQDHEVEIQVKATGLNFRDIMACMGLIPVRSLGQEASGIVLRTGAKATNFKPGDRVCTMNVGTHATKIRADYRVMTKIPDSMTFEEAASVAVVHTTAYYAFITIAKLRKGQSVLIHAAAGGVGQAAIQLAKHLGLITYVTVGTEDKRQLIREQYGIPDEHIFNSRDASFVKGVQRVTNGRGVDCVLNSLSGELLRASWGCLATFGHFIEIGLRDITNNMRLDMRPFRKSTSFTFINTHTLFEEDPAALGDILNESFKLMFAGALTAPSPLNAYPIGQVEEAFRTMQQGKHRGKMVLSFSDDAKAPVLRKAKDSLKLDPDATYLFVGGLGGLGRSLAKEFVASGARNIAFLSRSGDTTAQAKAIVDELAGQGIQVKAYRGDIASEASFLQAMEQCSQDLPPVKGVIQMAMVLRDIVFEKMSYDEWTVPVGPKVQGSWNLHKYFSHERPLDFMVICSSSSGIYGYPSQAQYAAGNTYQDALAHYRRSQGLNAISVNLGIMRDVGVLAETGTTGNIKLWEEVLGIREPAFHALMKSLINHQQRGSGDYPAQVCTGLGTADIMATHGLARPEYFNDPRFGPLAVTTVATDASADGQGSAVSLASRLSKVSTKDEAAEIITDALVNKTADILQMPPSEVDPGRPLYRYGVDSLVALEVRNWITREMKANMALLEILAAVPIESFAVKIAEKSKLVTV.

The region spanning 9–435 is the Ketosynthase family 3 (KS3) domain; that stretch reads HVPVAIIGLA…GTNGHVVLEA (427 aa). Catalysis depends on for beta-ketoacyl synthase activity residues Cys182, His317, and His357. The interval 551–856 is malonyl-CoA:ACP transacylase (MAT) domain; it reads FVFTGQGAQW…SHNGIKNVAY (306 aa). An N-terminal hotdog fold region spans residues 930–1066; sequence RSLIGAPVPM…GLVAIDYEES (137 aa). The 321-residue stretch at 930–1250 folds into the PKS/mFAS DH domain; it reads RSLIGAPVPM…TSELDMDSGK (321 aa). A dehydratase (DH) domain region spans residues 932-1244; sequence LIGAPVPMMA…SVKDFRTSEL (313 aa). The active-site Proton acceptor; for dehydratase activity is His962. The interval 1094–1250 is C-terminal hotdog fold; it reads PEHYAHDKFY…TSELDMDSGK (157 aa). The active-site Proton donor; for dehydratase activity is Asp1160. An enoyl reductase (ER) domain region spans residues 1641-1953; the sequence is GLLDTLKFVP…QGKHRGKMVL (313 aa). The ketoreductase (KR) domain stretch occupies residues 1977–2157; the sequence is ATYLFVGGLG…ISVNLGIMRD (181 aa). The 78-residue stretch at 2267-2344 folds into the Carrier domain; sequence EAAEIITDAL…SFAVKIAEKS (78 aa). Ser2304 is modified (O-(pantetheine 4'-phosphoryl)serine).

It participates in secondary metabolite biosynthesis. Reducing polyketide synthase; part of the gene cluster that mediates the biosynthesis of hypothemycin, a resorcylic acid lactone (RAL) that irreversibly inhibits a subset of protein kinases with a conserved cysteine in the ATP binding site such as human ERK2. The first step is performed by both PKSs hmp3 and hmp8 and leads to the production of 7',8'-dehydrozearalenol (DHZ). The highly reducing PKS hpm8 synthesizes the reduced hexaketide (7S,11S,2E,8E)-7,11-dihydroxy-dodeca-2,8-dienoate, which is transferred downstream to the non-reducing PKS hpm3. Hpm3 then extends the reduced hexaketide to a nonaketide, after which regioselective cyclization and macrolactonization affords DHZ. The next step is the conversion of DHZ into aigialomycin C and is performed by the O-methyltransferase hmp5, the FAD-binding monooxygenase hmp7, and the cytochrome P450 monooxygenase hmp1. The wide substrate tolerance of the hmp5 and hmp7 implies that the reactions from DHZ to aigialomycin C can occur in any order. The steps from aigialomycin C to hypothemycin are less well established. The FAD-linked oxidoreductase hmp9 presumably catalyzes oxidation of the C-6' hydroxyl to a ketone. The timing of this oxidation is important, since the resulting enone functional group is a Michael acceptor that can react spontaneously with glutathione, an abundant metabolite in fungal cells. The glutathione S-transferase hmp2 catalyzes cis-trans isomerization of the 7',8' double bond with equilibrium favoring the trans isomer. The hpm6-encoded transporter might preferentially pump hypothemycin out of the cell relative to the trans isomer aigialomycin A. The cis-to-trans isomerization may be coupled with C-4' hydroxylation, since all known hypothemycin analogs containing the enone functional group also have hydroxyl groups at both C-4' and C-5'. This is Reducing polyketide synthase hmp8 from Hypomyces subiculosus (Nectria subiculosa).